The sequence spans 267 residues: O-methyltransferase (267 aa).

Positions 100 and 145 each coordinate S-adenosyl-L-methionine.

The protein belongs to the methyltransferase superfamily.

Its pathway is antifungal biosynthesis. Its function is as follows. O-methyltransferase; part of the gene cluster that mediates the biosynthesis of the tetrahydropyranyl antifungal agent lanomycin that acts as an inhibitor of CYP51 and blocks the ergosterol biosynthesis. The biosynthesis probably begins with the formation of an hexaketide, followed by methionine mediated alkylation of C-2 and C-6, and methylation of the reduced C-3 oxygen, pyran forming reductive ring closure, oxygenation of C-4, beta-keto reduction, enoyl reduction and dehydration of the remaining oxygens, and finally, acylation with glycine to complete the biosynthesis. The protein is O-methyltransferase of Pyrenophora dematioidea (Helminthosporium dematioideum).